The chain runs to 251 residues: Ubiquinone biosynthesis O-methyltransferase (251 aa).

Residues Arg36, Gly61, Asp82, and Ile124 each coordinate S-adenosyl-L-methionine.

The protein belongs to the methyltransferase superfamily. UbiG/COQ3 family.

It catalyses the reaction a 3-demethylubiquinol + S-adenosyl-L-methionine = a ubiquinol + S-adenosyl-L-homocysteine + H(+). The catalysed reaction is a 3-(all-trans-polyprenyl)benzene-1,2-diol + S-adenosyl-L-methionine = a 2-methoxy-6-(all-trans-polyprenyl)phenol + S-adenosyl-L-homocysteine + H(+). It functions in the pathway cofactor biosynthesis; ubiquinone biosynthesis. Its function is as follows. O-methyltransferase that catalyzes the 2 O-methylation steps in the ubiquinone biosynthetic pathway. The polypeptide is Ubiquinone biosynthesis O-methyltransferase (Rickettsia akari (strain Hartford)).